The chain runs to 115 residues: U3-lycotoxin-Ls1e (115 aa).

The first 20 residues, 1-20 (MKFVLLFGVLSLTLFSYSSA), serve as a signal peptide directing secretion. Positions 21 to 44 (EMLDDFDQADEDELLSLIEKEEAR) are excised as a propeptide. Cystine bridges form between C48–C63, C55–C72, C62–C87, and C74–C85.

It belongs to the neurotoxin 19 (CSTX) family. 01 subfamily. Expressed by the venom gland.

It localises to the secreted. The protein is U3-lycotoxin-Ls1e of Lycosa singoriensis (Wolf spider).